The primary structure comprises 322 residues: Uracil-DNA glycosylase (322 aa).

D142 (proton acceptor) is an active-site residue.

This sequence belongs to the uracil-DNA glycosylase (UDG) superfamily. UNG family.

It localises to the mitochondrion. Its subcellular location is the nucleus. The enzyme catalyses Hydrolyzes single-stranded DNA or mismatched double-stranded DNA and polynucleotides, releasing free uracil.. Its function is as follows. Excises uracil residues from the DNA which can arise as a result of misincorporation of dUMP residues by DNA polymerase or due to deamination of cytosine. The polypeptide is Uracil-DNA glycosylase (ung1) (Schizosaccharomyces pombe (strain 972 / ATCC 24843) (Fission yeast)).